The following is a 238-amino-acid chain: Ribose-5-phosphate isomerase A (238 aa).

Substrate contacts are provided by residues 30–33 (SGST), 87–90 (DGAD), and 100–103 (KGGG). The active-site Proton acceptor is the E109. K127 is a substrate binding site.

The protein belongs to the ribose 5-phosphate isomerase family. Homodimer.

It catalyses the reaction aldehydo-D-ribose 5-phosphate = D-ribulose 5-phosphate. It functions in the pathway carbohydrate degradation; pentose phosphate pathway; D-ribose 5-phosphate from D-ribulose 5-phosphate (non-oxidative stage): step 1/1. In terms of biological role, catalyzes the reversible conversion of ribose-5-phosphate to ribulose 5-phosphate. The protein is Ribose-5-phosphate isomerase A of Synechococcus sp. (strain CC9311).